A 105-amino-acid polypeptide reads, in one-letter code: Multidrug resistance protein EbrA (105 aa).

The next 4 helical transmembrane spans lie at 2 to 22 (IAGY…AAML), 35 to 55 (VLVV…LQVI), 60 to 80 (SYAT…VLWF), and 87 to 104 (RNIA…LINL).

This sequence belongs to the drug/metabolite transporter (DMT) superfamily. Small multidrug resistance (SMR) (TC 2.A.7.1) family. EbrA/EbrB subfamily. As to quaternary structure, the efflux pump is composed of EbrA and EbrB.

Its subcellular location is the cell membrane. Its function is as follows. Part of a multidrug efflux pump. Confers resistance to cationic lipophilic dyes such as ethidium bromide, acriflavine, pyronine Y and safranin O. The efflux is probably coupled to an influx of protons. In Bacillus licheniformis (strain ATCC 14580 / DSM 13 / JCM 2505 / CCUG 7422 / NBRC 12200 / NCIMB 9375 / NCTC 10341 / NRRL NRS-1264 / Gibson 46), this protein is Multidrug resistance protein EbrA (ebrA).